The primary structure comprises 100 residues: MYYSFMTMKQSDDQIRAQIFKALSDESRLAIIRTLYVSGKELSCGEVGEKCNIVKTTASYHFKTLREAGLTATRKDSRTKYVSLREDTFQTYLPGFLETL.

The region spanning 8-100 (MKQSDDQIRA…TYLPGFLETL (93 aa)) is the HTH arsR-type domain. Residues 44-67 (CGEVGEKCNIVKTTASYHFKTLRE) constitute a DNA-binding region (H-T-H motif).

This is an uncharacterized protein from Bacillus subtilis (strain 168).